Consider the following 435-residue polypeptide: Tyrosine-protein phosphatase non-receptor type 1 (435 aa).

Residue Met1 is modified to N-acetylmethionine. A Tyrosine-protein phosphatase domain is found at 3–277 (MEKEFEQIDK…RFSYLAVIEG (275 aa)). A Phosphotyrosine modification is found at Tyr20. Ser50 bears the Phosphoserine; by PKB/AKT1, CLK1 and CLK2 mark. A Phosphotyrosine; by EGFR modification is found at Tyr66. Substrate-binding positions include Asp181 and 215–221 (CSAGIGR). Cys215 acts as the Phosphocysteine intermediate in catalysis. A Cysteine persulfide; alternate modification is found at Cys215. A Cysteine sulfenic acid (-SOH); alternate modification is found at Cys215. Cysteine sulfinic acid (-SO2H); alternate is present on Cys215. Cys215 carries the post-translational modification S-nitrosocysteine; in reversibly inhibited form. The segment at residues 215–216 (CS) is a cross-link (n,N-(cysteine-1,S-diyl)serine (Cys-Ser); in inhibited form). A phosphoserine; by CLK1 and CLK2 mark is found at Ser242 and Ser243. Gln262 contributes to the substrate binding site. A compositionally biased stretch (basic and acidic residues) spans 338 to 351 (TQEDKDCPIKEEKG). Residues 338-359 (TQEDKDCPIKEEKGSPLNAAPY) are disordered. 3 positions are modified to phosphoserine: Ser352, Ser363, and Ser365. Phosphothreonine is present on Thr368. Ser378 carries the post-translational modification Phosphoserine; by PKC. Residues 378 to 398 (SLRGAQAASPAKGEPSLPEKD) form a disordered region. Residue Ser386 is modified to Phosphoserine; by CDK1.

It belongs to the protein-tyrosine phosphatase family. Non-receptor class 1 subfamily. As to quaternary structure, interacts with EPHA3 (phosphorylated); dephosphorylates EPHA3 and may regulate its trafficking and function. Interacts with MET. Interacts with NCK1. Post-translationally, oxidized on Cys-215; the Cys-SOH formed in response to redox signaling reacts with the alpha-amido of the following residue to form a sulfenamide cross-link, triggering a conformational change that inhibits substrate binding and activity. The active site can be restored by reduction. In terms of processing, ser-50 is the major site of phosphorylation as compared to Ser-242 and Ser-243. Activated by phosphorylation at Ser-50. S-nitrosylation of Cys-215 inactivates the enzyme activity. Post-translationally, sulfhydration at Cys-215 following endoplasmic reticulum stress inactivates the enzyme activity, promoting EIF2AK3/PERK activity. As to expression, expressed in keratinocytes (at protein level).

Its subcellular location is the endoplasmic reticulum membrane. It catalyses the reaction O-phospho-L-tyrosyl-[protein] + H2O = L-tyrosyl-[protein] + phosphate. Tyrosine-protein phosphatase which acts as a regulator of endoplasmic reticulum unfolded protein response. Mediates dephosphorylation of EIF2AK3/PERK; inactivating the protein kinase activity of EIF2AK3/PERK. May play an important role in CKII- and p60c-src-induced signal transduction cascades. May regulate the EFNA5-EPHA3 signaling pathway which modulates cell reorganization and cell-cell repulsion. May also regulate the hepatocyte growth factor receptor signaling pathway through dephosphorylation of MET. The polypeptide is Tyrosine-protein phosphatase non-receptor type 1 (PTPN1) (Homo sapiens (Human)).